Reading from the N-terminus, the 348-residue chain is UDP-glucose 4-epimerase (348 aa).

T125 is a substrate binding site. Y149 acts as the Proton acceptor in catalysis.

It belongs to the NAD(P)-dependent epimerase/dehydratase family. It depends on NAD(+) as a cofactor.

It catalyses the reaction UDP-alpha-D-glucose = UDP-alpha-D-galactose. Its pathway is carbohydrate metabolism; galactose metabolism. It participates in glycan metabolism; exopolysaccharide biosynthesis. In Azospirillum brasilense, this protein is UDP-glucose 4-epimerase (exoB).